The sequence spans 1031 residues: Probable ATP-dependent RNA helicase DDX46 (1031 aa).

Over residues 1 to 24 the composition is skewed to basic residues; that stretch reads MGRESRHYRKRSASRGRSGSRSRS. Positions 1-228 are disordered; sequence MGRESRHYRK…EMEGEELDPL (228 aa). G2 carries N-myristoyl glycine lipidation. Positions 26-49 are enriched in basic and acidic residues; it reads SPSDKRSKRGDDRRSRSRDRDRRR. Basic residues-rich tracts occupy residues 50-73 and 81-103; these read ERSRSRDKRRSRSRDRKRLRRSRS and ERRRSRSRDRRRSRSRSRGRRSR. The segment covering 112–200 has biased composition (basic and acidic residues); it reads KKTENRSRSK…EMKQGKKWSL (89 aa). Positions 152–197 form a coiled coil; it reads DQNKLEEEMRKRKERVEKWREEQRKKAMENIGELKKEIEEMKQGKK. K186 is covalently cross-linked (Glycyl lysine isopeptide (Lys-Gly) (interchain with G-Cter in SUMO2)). S199 is subject to Phosphoserine. 2 stretches are compositionally biased toward acidic residues: residues 201–211 and 219–228; these read EDDDDDEDDPA and EMEGEELDPL. At K263 the chain carries N6-acetyllysine. A Phosphotyrosine modification is found at Y294. A phosphoserine mark is found at S295 and S296. A Glycyl lysine isopeptide (Lys-Gly) (interchain with G-Cter in SUMO2) cross-link involves residue K325. Phosphoserine is present on S346. Positions 372 to 400 match the Q motif motif; the sequence is KSWVQCGISMKILNSLKKHGYEKPTPIQT. One can recognise a Helicase ATP-binding domain in the interval 403-581; sequence IPAIMSGRDL…RRILSKPIEV (179 aa). Residue 416 to 423 coordinates ATP; the sequence is AKTGSGKT. Positions 529–532 match the DEAD box motif; it reads DEAD. The 162-residue stretch at 592 to 753 folds into the Helicase C-terminal domain; that stretch reads DVEQQVIVIE…AVPPDLEKLW (162 aa). K776 carries the post-translational modification N6-acetyllysine. Residue K779 forms a Glycyl lysine isopeptide (Lys-Gly) (interchain with G-Cter in SUMO2) linkage. The residue at position 804 (S804) is a Phosphoserine. K903 carries the N6-acetyllysine modification. Glycyl lysine isopeptide (Lys-Gly) (interchain with G-Cter in SUMO2) cross-links involve residues K907 and K915. S928 carries the phosphoserine modification.

Belongs to the DEAD box helicase family. DDX46/PRP5 subfamily. Component of the 17S U2 SnRNP complex, a ribonucleoprotein complex that contains small nuclear RNA (snRNA) U2 and a number of specific proteins. Within the 17S U2 SnRNP complex, DDX46 is part of the SF3B subcomplex, which is required for 'A' complex assembly formed by the stable binding of U2 snRNP to the branchpoint sequence in pre-mRNA. Recruited to the 17S U2 SnRNP complex following release of DDX42; DDX42 and DDX46 bind the SF3B subcomplex in a competitive manner.

Its subcellular location is the nucleus speckle. It localises to the nucleus. The protein localises to the cajal body. It catalyses the reaction ATP + H2O = ADP + phosphate + H(+). Its function is as follows. Component of the 17S U2 SnRNP complex of the spliceosome, a large ribonucleoprotein complex that removes introns from transcribed pre-mRNAs. The 17S U2 SnRNP complex (1) directly participates in early spliceosome assembly and (2) mediates recognition of the intron branch site during pre-mRNA splicing by promoting the selection of the pre-mRNA branch-site adenosine, the nucleophile for the first step of splicing. Within the 17S U2 SnRNP complex, DDX46 plays essential roles during assembly of pre-spliceosome and proofreading of the branch site. This is Probable ATP-dependent RNA helicase DDX46 from Homo sapiens (Human).